The sequence spans 698 residues: Polyribonucleotide nucleotidyltransferase (698 aa).

2 residues coordinate Mg(2+): D490 and D496. Positions 557 to 616 (PKVVTMTIKPDKIRDVIGPGGKKINEIIDETGVKLDIEQDGTIFIGAVDQAMINRAREII) constitute a KH domain. Residues 626–694 (GQTYQATVKR…KQGRVNASHR (69 aa)) enclose the S1 motif domain.

The protein belongs to the polyribonucleotide nucleotidyltransferase family. Requires Mg(2+) as cofactor.

The protein localises to the cytoplasm. The enzyme catalyses RNA(n+1) + phosphate = RNA(n) + a ribonucleoside 5'-diphosphate. Functionally, involved in mRNA degradation. Catalyzes the phosphorolysis of single-stranded polyribonucleotides processively in the 3'- to 5'-direction. The polypeptide is Polyribonucleotide nucleotidyltransferase (Staphylococcus aureus (strain MRSA252)).